The primary structure comprises 256 residues: UPF0644 protein PB2B4.06 (256 aa).

A helical transmembrane segment spans residues 34–56; sequence GVVYAGVSGTCAAAGYMFGNFVM.

The protein belongs to the UPF0644 family.

It is found in the mitochondrion membrane. The polypeptide is UPF0644 protein PB2B4.06 (Schizosaccharomyces pombe (strain 972 / ATCC 24843) (Fission yeast)).